The primary structure comprises 530 residues: Autoinducer-2 kinase (530 aa).

Belongs to the FGGY kinase family.

The protein localises to the cytoplasm. The catalysed reaction is (S)-4,5-dihydroxypentane-2,3-dione + ATP = (2S)-2-hydroxy-3,4-dioxopentyl phosphate + ADP + H(+). Its function is as follows. Catalyzes the phosphorylation of autoinducer-2 (AI-2) to phospho-AI-2, which subsequently inactivates the transcriptional regulator LsrR and leads to the transcription of the lsr operon. Phosphorylates the ring-open form of (S)-4,5-dihydroxypentane-2,3-dione (DPD), which is the precursor to all AI-2 signaling molecules, at the C5 position. This chain is Autoinducer-2 kinase, found in Escherichia coli (strain K12 / DH10B).